The following is a 259-amino-acid chain: Ribonuclease PH (259 aa).

Phosphate contacts are provided by residues Arg88 and Gly126 to Arg128.

It belongs to the RNase PH family. In terms of assembly, homohexameric ring arranged as a trimer of dimers.

It catalyses the reaction tRNA(n+1) + phosphate = tRNA(n) + a ribonucleoside 5'-diphosphate. In terms of biological role, phosphorolytic 3'-5' exoribonuclease that plays an important role in tRNA 3'-end maturation. Removes nucleotide residues following the 3'-CCA terminus of tRNAs; can also add nucleotides to the ends of RNA molecules by using nucleoside diphosphates as substrates, but this may not be physiologically important. Probably plays a role in initiation of 16S rRNA degradation (leading to ribosome degradation) during starvation. The sequence is that of Ribonuclease PH from Mycobacterium leprae (strain Br4923).